We begin with the raw amino-acid sequence, 1001 residues long: Sarcoplasmic/endoplasmic reticulum calcium ATPase 1 (1001 aa).

The Cytoplasmic segment spans residues 1-48; sequence MEAAHSKSTEECLAYFGVSETTGLTPDQVKRHLEKYGHNELPAEEGKS. A helical membrane pass occupies residues 49 to 69; it reads LWELVIEQFEDLLVRILLLAA. At 70 to 89 the chain is on the lumenal side; the sequence is CISFVLAWFEEGEETITAFV. A helical transmembrane segment spans residues 90-110; sequence EPFVILLILIANAIVGVWQER. The Cytoplasmic portion of the chain corresponds to 111-253; it reads NAENAIEALK…QDKTPLQQKL (143 aa). The chain crosses the membrane as a helical span at residues 254–273; sequence DEFGEQLSKVISLICVAVWL. The Lumenal segment spans residues 274-295; the sequence is INIGHFNDPVHGGSWIRGAIYY. A helical transmembrane segment spans residues 296–313; it reads FKIAVALAVAAIPEGLPA. Val304, Ala305, Ile307, and Glu309 together coordinate Ca(2+). The Cytoplasmic segment spans residues 314 to 757; it reads VITTCLALGT…EEGRAIYNNM (444 aa). The active-site 4-aspartylphosphate intermediate is the Asp351. Mg(2+) is bound by residues Asp351 and Thr353. Position 353 (Thr353) interacts with ATP. At Thr441 the chain carries Phosphothreonine. ATP is bound by residues Glu442, Arg489, Lys515, and Arg560. The residue at position 569 (Thr569) is a Phosphothreonine. Ser581 carries the post-translational modification Phosphoserine. Positions 625, 626, 627, 678, and 684 each coordinate ATP. Mg(2+) is bound at residue Asp703. Asn706 contacts ATP. A helical transmembrane segment spans residues 758 to 777; sequence KQFIRYLISSNVGEVVCIFL. The Ca(2+) site is built by Asn768 and Glu771. Topologically, residues 778-787 are lumenal; the sequence is TAALGLPEAL. A helical membrane pass occupies residues 788-808; sequence IPVQLLWVNLVTDGLPATALG. An interaction with PLN region spans residues 788–808; sequence IPVQLLWVNLVTDGLPATALG. Residues Asn796, Thr799, and Asp800 each contribute to the Ca(2+) site. Residues 809–828 lie on the Cytoplasmic side of the membrane; it reads FNPPDLDIMDRPPRSPKEPL. A helical membrane pass occupies residues 829–851; that stretch reads ISGWLFFRYMAIGGYVGAATVGA. Over 852-897 the chain is Lumenal; sequence AAWWFMYAEDGPGVTYHQLTHFMQCTEDHPHFEGLDCEIFEAPEPM. Cysteines 876 and 888 form a disulfide. Residues 898 to 917 traverse the membrane as a helical segment; that stretch reads TMALSVLVTIEMCNALNSLS. Glu908 provides a ligand contact to Ca(2+). Topologically, residues 918-930 are cytoplasmic; that stretch reads ENQSLMRMPPWVN. A helical transmembrane segment spans residues 931-949; that stretch reads IWLLGSICLSMSLHFLILY. Residues 932 to 943 form an interaction with PLN region; it reads WLLGSICLSMSL. Residues 950–964 lie on the Lumenal side of the membrane; sequence VDPLPMIFKLKALDL. Residues 965-985 traverse the membrane as a helical segment; sequence TQWLMVLKISLPVIGLDEILK. Topologically, residues 986–1001 are cytoplasmic; sequence FIARNYLEDPEDERRK.

The protein belongs to the cation transport ATPase (P-type) (TC 3.A.3) family. Type IIA subfamily. As to quaternary structure, interacts with sarcolipin (SLN). Interacts with phospholamban (PLN). Interacts with myoregulin (MRLN). Interacts with DWORF. Interacts with VMP1. Mg(2+) is required as a cofactor. As to expression, skeletal muscle (at protein level). Skeletal muscle, fast twitch muscle (type II) fibers.

The protein resides in the endoplasmic reticulum membrane. It localises to the sarcoplasmic reticulum membrane. The enzyme catalyses Ca(2+)(in) + ATP + H2O = Ca(2+)(out) + ADP + phosphate + H(+). With respect to regulation, inhibited by sarcolipin (SLN) and myoregulin (MRLN). Has also been shown to be reversibly inhibited by phospholamban (PLN) at low calcium concentrations in vitro. Dephosphorylated PLN decreases the apparent affinity of the ATPase for calcium and this inhibition is regulated by the phosphorylation of PLN in vitro. Enhanced by DWORF; DWORF increases activity by displacing sarcolipin (SLN), phospholamban (PLN) and myoregulin (MRLN). Key regulator of striated muscle performance by acting as the major Ca(2+) ATPase responsible for the reuptake of cytosolic Ca(2+) into the sarcoplasmic reticulum. Catalyzes the hydrolysis of ATP coupled with the translocation of calcium from the cytosol to the sarcoplasmic reticulum lumen. Contributes to calcium sequestration involved in muscular excitation/contraction. This is Sarcoplasmic/endoplasmic reticulum calcium ATPase 1 (ATP2A1) from Oryctolagus cuniculus (Rabbit).